A 270-amino-acid chain; its full sequence is Acyl-[acyl-carrier-protein]--UDP-N-acetylglucosamine O-acyltransferase (270 aa).

It belongs to the transferase hexapeptide repeat family. LpxA subfamily. Homotrimer.

Its subcellular location is the cytoplasm. The enzyme catalyses a (3R)-hydroxyacyl-[ACP] + UDP-N-acetyl-alpha-D-glucosamine = a UDP-3-O-[(3R)-3-hydroxyacyl]-N-acetyl-alpha-D-glucosamine + holo-[ACP]. The protein operates within glycolipid biosynthesis; lipid IV(A) biosynthesis; lipid IV(A) from (3R)-3-hydroxytetradecanoyl-[acyl-carrier-protein] and UDP-N-acetyl-alpha-D-glucosamine: step 1/6. Functionally, involved in the biosynthesis of lipid A, a phosphorylated glycolipid that anchors the lipopolysaccharide to the outer membrane of the cell. The sequence is that of Acyl-[acyl-carrier-protein]--UDP-N-acetylglucosamine O-acyltransferase from Bartonella tribocorum (strain CIP 105476 / IBS 506).